Here is a 668-residue protein sequence, read N- to C-terminus: UvrABC system protein B (668 aa).

The Helicase ATP-binding domain maps to 31–416 (QGITDGVPAQ…RGHIIEQIIR (386 aa)). 44–51 (GTTGSGKT) is a binding site for ATP. Residues 97–120 (YYDYYQPEAYIARSDTYIEKSLLI) carry the Beta-hairpin motif. One can recognise a Helicase C-terminal domain in the interval 433 to 596 (QIDDLLEEIR…ITPQPIIKPI (164 aa)). One can recognise a UVR domain in the interval 621–656 (EASIKTYEEAMYQAAQEFQFDEAVKYRDLMNAAKKQ).

The protein belongs to the UvrB family. Forms a heterotetramer with UvrA during the search for lesions. Interacts with UvrC in an incision complex.

Its subcellular location is the cytoplasm. Its function is as follows. The UvrABC repair system catalyzes the recognition and processing of DNA lesions. A damage recognition complex composed of 2 UvrA and 2 UvrB subunits scans DNA for abnormalities. Upon binding of the UvrA(2)B(2) complex to a putative damaged site, the DNA wraps around one UvrB monomer. DNA wrap is dependent on ATP binding by UvrB and probably causes local melting of the DNA helix, facilitating insertion of UvrB beta-hairpin between the DNA strands. Then UvrB probes one DNA strand for the presence of a lesion. If a lesion is found the UvrA subunits dissociate and the UvrB-DNA preincision complex is formed. This complex is subsequently bound by UvrC and the second UvrB is released. If no lesion is found, the DNA wraps around the other UvrB subunit that will check the other stand for damage. In Chlamydia trachomatis serovar A (strain ATCC VR-571B / DSM 19440 / HAR-13), this protein is UvrABC system protein B.